The following is a 191-amino-acid chain: Potassium-transporting ATPase KdpC subunit (191 aa).

The helical transmembrane segment at 11–31 threads the bilayer; it reads LFVLLTAVTGVVYPLAVTGIA.

This sequence belongs to the KdpC family. In terms of assembly, the system is composed of three essential subunits: KdpA, KdpB and KdpC.

The protein localises to the cell inner membrane. Its function is as follows. Part of the high-affinity ATP-driven potassium transport (or Kdp) system, which catalyzes the hydrolysis of ATP coupled with the electrogenic transport of potassium into the cytoplasm. This subunit acts as a catalytic chaperone that increases the ATP-binding affinity of the ATP-hydrolyzing subunit KdpB by the formation of a transient KdpB/KdpC/ATP ternary complex. The polypeptide is Potassium-transporting ATPase KdpC subunit (Dechloromonas aromatica (strain RCB)).